Reading from the N-terminus, the 920-residue chain is Periplasmic nitrate reductase (920 aa).

The segment at residues Met1–Ala29 is a signal peptide (tat-type signal). Residues Trp35 to Asp91 form the 4Fe-4S Mo/W bis-MGD-type domain. 4 residues coordinate [4Fe-4S] cluster: Cys42, Cys45, Cys49, and Cys77. Mo-bis(molybdopterin guanine dinucleotide)-binding positions include Lys79, Gln147, Asn172, Cys176, Trp209–Met216, Met416, Gln420, Asn526, Ser551–Asp552, Lys574, Asp601, and Thr810–Ser819. Trp886 serves as a coordination point for substrate. Residues Asn894 and Lys911 each contribute to the Mo-bis(molybdopterin guanine dinucleotide) site.

Belongs to the prokaryotic molybdopterin-containing oxidoreductase family. NasA/NapA/NarB subfamily. As to quaternary structure, component of the periplasmic nitrate reductase NapAB complex composed of NapA and NapB. The cofactor is [4Fe-4S] cluster. Requires Mo-bis(molybdopterin guanine dinucleotide) as cofactor. Predicted to be exported by the Tat system. The position of the signal peptide cleavage has not been experimentally proven.

Its subcellular location is the periplasm. The catalysed reaction is 2 Fe(II)-[cytochrome] + nitrate + 2 H(+) = 2 Fe(III)-[cytochrome] + nitrite + H2O. Functionally, catalytic subunit of the periplasmic nitrate reductase complex NapAB. Receives electrons from NapB and catalyzes the reduction of nitrate to nitrite. This chain is Periplasmic nitrate reductase, found in Campylobacter hominis (strain ATCC BAA-381 / DSM 21671 / CCUG 45161 / LMG 19568 / NCTC 13146 / CH001A).